Reading from the N-terminus, the 438-residue chain is MAPVPVTASNLNTSHSEAIFSAAKALMPGGVSSPVRAFKSVGGQPIVFDRVKGPYAWDVDGNKYVDYIGSWGPAICGHAHPEVISALQEAIEKGTSFGAPCALENTLAEMVIEAVPSVEMVRFVNSGTEACMSMLRLIRAFTGRDKIIKFEGCYHGHADMFLVKAGSGVATLGLPDSPGVPRSTTANTLTAPYNDLESVKQLFAENPDAIAGVILEPIVGNAGFIQPEPGFLEGLRELTKENGALLVFDEVMTGFRISYGGAQAHFGVTPDLTTMGKVIGGGLPVGAYGGRKEIMEMVAPAGPMYQAGTLSGNPLAMTAGIKTLELLKQPGSYEKLTATTERLIQGILDAGREAGLPITGGSVGAMFGFFLCEGPVRNFEEAKATDSVRFGLLHRAMLERGVYLAPSAFEAGFTSLAHSDENIDATIQAFRDSFAAIS.

Lys-277 carries the post-translational modification N6-(pyridoxal phosphate)lysine.

It belongs to the class-III pyridoxal-phosphate-dependent aminotransferase family. HemL subfamily. Homodimer. The cofactor is pyridoxal 5'-phosphate.

It localises to the cytoplasm. It carries out the reaction (S)-4-amino-5-oxopentanoate = 5-aminolevulinate. Its pathway is porphyrin-containing compound metabolism; protoporphyrin-IX biosynthesis; 5-aminolevulinate from L-glutamyl-tRNA(Glu): step 2/2. It functions in the pathway porphyrin-containing compound metabolism; chlorophyll biosynthesis. This chain is Glutamate-1-semialdehyde 2,1-aminomutase, found in Synechococcus sp. (strain CC9311).